The following is a 551-amino-acid chain: Palmdelphin (551 aa).

At methionine 1 the chain carries N-acetylmethionine. The stretch at 2 to 106 forms a coiled coil; the sequence is EEAELVKERL…LQISTNEEAI (105 aa). Residue lysine 125 forms a Glycyl lysine isopeptide (Lys-Gly) (interchain with G-Cter in SUMO2) linkage. Residue serine 135 is modified to Phosphoserine. A Glycyl lysine isopeptide (Lys-Gly) (interchain with G-Cter in SUMO1); alternate cross-link involves residue lysine 179. A Glycyl lysine isopeptide (Lys-Gly) (interchain with G-Cter in SUMO2); alternate cross-link involves residue lysine 179. Over residues 247 to 259 the composition is skewed to basic and acidic residues; the sequence is SERNSKSPTEYHD. Disordered regions lie at residues 247 to 393 and 450 to 529; these read SERN…EDEE and EEEE…IAGD. At threonine 271 the chain carries Phosphothreonine. Phosphoserine is present on residues serine 321, serine 370, serine 384, and serine 385. The span at 484 to 495 shows a compositional bias: basic and acidic residues; sequence KRAEVNPHENTN. 3 positions are modified to phosphoserine: serine 498, serine 515, and serine 520.

Belongs to the paralemmin family. As to quaternary structure, interacts with GLUL. Cell projection, dendrite. Cell projection, dendritic spine. Post-translationally, phosphorylated.

It localises to the cytoplasm. Its subcellular location is the cell projection. The protein resides in the dendrite. It is found in the dendritic spine. In Sus scrofa (Pig), this protein is Palmdelphin (PALMD).